The following is a 414-amino-acid chain: Serine hydroxymethyltransferase (414 aa).

Residues leucine 121 and 125–127 (GHL) each bind (6S)-5,6,7,8-tetrahydrofolate. Position 230 is an N6-(pyridoxal phosphate)lysine (lysine 230).

This sequence belongs to the SHMT family. Homodimer. Pyridoxal 5'-phosphate is required as a cofactor.

It localises to the cytoplasm. The catalysed reaction is (6R)-5,10-methylene-5,6,7,8-tetrahydrofolate + glycine + H2O = (6S)-5,6,7,8-tetrahydrofolate + L-serine. The protein operates within one-carbon metabolism; tetrahydrofolate interconversion. It participates in amino-acid biosynthesis; glycine biosynthesis; glycine from L-serine: step 1/1. Functionally, catalyzes the reversible interconversion of serine and glycine with tetrahydrofolate (THF) serving as the one-carbon carrier. This reaction serves as the major source of one-carbon groups required for the biosynthesis of purines, thymidylate, methionine, and other important biomolecules. Also exhibits THF-independent aldolase activity toward beta-hydroxyamino acids, producing glycine and aldehydes, via a retro-aldol mechanism. The sequence is that of Serine hydroxymethyltransferase from Acidithiobacillus ferrooxidans (strain ATCC 23270 / DSM 14882 / CIP 104768 / NCIMB 8455) (Ferrobacillus ferrooxidans (strain ATCC 23270)).